The sequence spans 199 residues: Early nodulin-like protein 3 (199 aa).

The signal sequence occupies residues 1–23; that stretch reads MGLVMRFDLYLMFVMLMGLGFTI. In terms of domain architecture, Phytocyanin spans 27–128; the sequence is YKFYVGGKDG…GQKLAVKVLS (102 aa). N-linked (GlcNAc...) asparagine glycans are attached at residues asparagine 57 and asparagine 83. Residues cysteine 82 and cysteine 116 are joined by a disulfide bond. The tract at residues 130 to 180 is disordered; that stretch reads VHHSHSPRHTSPSPSPVHQELSSPGPSPGVEPSSDSNSRVPAPGPATAPNS. The segment covering 138–165 has biased composition (low complexity); that stretch reads HTSPSPSPVHQELSSPGPSPGVEPSSDS. Residue asparagine 179 is the site of GPI-anchor amidated asparagine attachment. The propeptide at 180–199 is removed in mature form; sequence SAGLVGPGMVVLVIMISSLF.

It belongs to the early nodulin-like (ENODL) family. Confined to flowers.

It localises to the cell membrane. May act as a carbohydrate transporter. In Arabidopsis thaliana (Mouse-ear cress), this protein is Early nodulin-like protein 3.